The primary structure comprises 88 residues: DNA-directed RNA polymerase subunit omega (88 aa).

Belongs to the RNA polymerase subunit omega family. As to quaternary structure, the RNAP catalytic core consists of 2 alpha, 1 beta, 1 beta' and 1 omega subunit. When a sigma factor is associated with the core the holoenzyme is formed, which can initiate transcription.

It carries out the reaction RNA(n) + a ribonucleoside 5'-triphosphate = RNA(n+1) + diphosphate. In terms of biological role, promotes RNA polymerase assembly. Latches the N- and C-terminal regions of the beta' subunit thereby facilitating its interaction with the beta and alpha subunits. This Anaeromyxobacter dehalogenans (strain 2CP-1 / ATCC BAA-258) protein is DNA-directed RNA polymerase subunit omega.